The primary structure comprises 860 residues: Leucine--tRNA ligase (860 aa).

The 'HIGH' region signature appears at 42–52; sequence PYPSGRLHMGH. A 'KMSKS' region motif is present at residues 619–623; the sequence is KMSKS. An ATP-binding site is contributed by Lys-622.

This sequence belongs to the class-I aminoacyl-tRNA synthetase family.

The protein resides in the cytoplasm. It catalyses the reaction tRNA(Leu) + L-leucine + ATP = L-leucyl-tRNA(Leu) + AMP + diphosphate. This Shigella dysenteriae serotype 1 (strain Sd197) protein is Leucine--tRNA ligase.